Consider the following 193-residue polypeptide: Glycerol-3-phosphate acyltransferase (193 aa).

Helical transmembrane passes span 4–24, 56–76, 80–100, 116–136, and 152–174; these read LALIMIIIAYLLGSISSAVLI, GLVLLCDILKGMLPVWGGYFL, PLLLGIIAIAACLGHMYPLFF, APIGLDLTGLLFGTWVVIVLI, and PLFTWLVKPQYTLPVAMLSCLIV.

It belongs to the PlsY family. Probably interacts with PlsX.

The protein resides in the cell inner membrane. It catalyses the reaction an acyl phosphate + sn-glycerol 3-phosphate = a 1-acyl-sn-glycero-3-phosphate + phosphate. It functions in the pathway lipid metabolism; phospholipid metabolism. Functionally, catalyzes the transfer of an acyl group from acyl-phosphate (acyl-PO(4)) to glycerol-3-phosphate (G3P) to form lysophosphatidic acid (LPA). This enzyme utilizes acyl-phosphate as fatty acyl donor, but not acyl-CoA or acyl-ACP. The chain is Glycerol-3-phosphate acyltransferase from Aliivibrio salmonicida (strain LFI1238) (Vibrio salmonicida (strain LFI1238)).